The following is a 480-amino-acid chain: Glycogen synthase (480 aa).

ADP-alpha-D-glucose is bound at residue Lys-15.

This sequence belongs to the glycosyltransferase 1 family. Bacterial/plant glycogen synthase subfamily.

The catalysed reaction is [(1-&gt;4)-alpha-D-glucosyl](n) + ADP-alpha-D-glucose = [(1-&gt;4)-alpha-D-glucosyl](n+1) + ADP + H(+). The protein operates within glycan biosynthesis; glycogen biosynthesis. Synthesizes alpha-1,4-glucan chains using ADP-glucose. This chain is Glycogen synthase, found in Clostridioides difficile (strain 630) (Peptoclostridium difficile).